The chain runs to 271 residues: Small ribosomal subunit protein uS9m (271 aa).

Residues 1-11 constitute a mitochondrion transit peptide; it reads MFRSLAKLRCF. The interval 251–271 is disordered; the sequence is KVERKKTGQPKARKKYTWVKR. The segment covering 252–271 has biased composition (basic residues); it reads VERKKTGQPKARKKYTWVKR.

Belongs to the universal ribosomal protein uS9 family. Component of the mitochondrial small ribosomal subunit (mt-SSU). Mature yeast 74S mitochondrial ribosomes consist of a small (37S) and a large (54S) subunit. The 37S small subunit contains a 15S ribosomal RNA (15S mt-rRNA) and at least 32 different proteins. The 54S large subunit contains a 21S rRNA (21S mt-rRNA) and at least 45 different proteins.

Its subcellular location is the mitochondrion. Functionally, component of the mitochondrial ribosome (mitoribosome), a dedicated translation machinery responsible for the synthesis of mitochondrial genome-encoded proteins, including at least some of the essential transmembrane subunits of the mitochondrial respiratory chain. The mitoribosomes are attached to the mitochondrial inner membrane and translation products are cotranslationally integrated into the membrane. In Schizosaccharomyces pombe (strain 972 / ATCC 24843) (Fission yeast), this protein is Small ribosomal subunit protein uS9m (mrps9).